The following is a 423-amino-acid chain: Glucose-6-phosphate isomerase (423 aa).

The Proton donor role is filled by glutamate 279. Catalysis depends on residues histidine 300 and lysine 413.

The protein belongs to the GPI family.

Its subcellular location is the cytoplasm. The catalysed reaction is alpha-D-glucose 6-phosphate = beta-D-fructose 6-phosphate. The protein operates within carbohydrate biosynthesis; gluconeogenesis. It participates in carbohydrate degradation; glycolysis; D-glyceraldehyde 3-phosphate and glycerone phosphate from D-glucose: step 2/4. In terms of biological role, catalyzes the reversible isomerization of glucose-6-phosphate to fructose-6-phosphate. The chain is Glucose-6-phosphate isomerase from Acholeplasma laidlawii (strain PG-8A).